The sequence spans 430 residues: Protein translocase subunit SecY (430 aa).

The next 10 helical transmembrane spans lie at 18 to 38 (IFFTLAMLVIFKIGTYIPAPG), 68 to 88 (FSIFAMGIMPYITASIVMQLL), 117 to 137 (FAIILAFIQSIGMAFQFNNYL), 148 to 168 (MSYLLIAIVLTTGTAFLLWLG), 179 to 199 (GISIIIFAGILSTLPSSLIQF), 215 to 235 (LQVAGLVIGLVLLTMGAVYVL), 270 to 290 (VIPVIFAMAFFLLPRTLTMFF), 308 to 328 (NIGMVIYIILIIAFTYFYAFV), 368 to 388 (FVGSIFLAVIAILPILATKFM), and 390 to 410 (LPQSIQVGGTSLLIVIGVAIE).

Belongs to the SecY/SEC61-alpha family. Component of the Sec protein translocase complex. Heterotrimer consisting of SecY, SecE and SecG subunits. The heterotrimers can form oligomers, although 1 heterotrimer is thought to be able to translocate proteins. Interacts with the ribosome. Interacts with SecDF, and other proteins may be involved. Interacts with SecA.

Its subcellular location is the cell membrane. Its function is as follows. The central subunit of the protein translocation channel SecYEG. Consists of two halves formed by TMs 1-5 and 6-10. These two domains form a lateral gate at the front which open onto the bilayer between TMs 2 and 7, and are clamped together by SecE at the back. The channel is closed by both a pore ring composed of hydrophobic SecY resides and a short helix (helix 2A) on the extracellular side of the membrane which forms a plug. The plug probably moves laterally to allow the channel to open. The ring and the pore may move independently. The chain is Protein translocase subunit SecY from Staphylococcus carnosus (strain TM300).